We begin with the raw amino-acid sequence, 697 residues long: Potassium channel KAT2 (697 aa).

The Cytoplasmic portion of the chain corresponds to 1–63; sequence MSISCTRNFF…PFDPRFRGWE (63 aa). Residues 64 to 84 traverse the membrane as a helical segment; the sequence is MWLVILVIYSAWICPFEFAFI. Residues 85-91 lie on the Extracellular side of the membrane; that stretch reads TYKKDAL. A helical membrane pass occupies residues 92–112; that stretch reads FIIDNIVNGFFAIDIILTFFV. Topologically, residues 113-134 are cytoplasmic; the sequence is AYLDSHSYLLVDKPKKIAIRYL. The chain crosses the membrane as a helical span at residues 135–155; the sequence is STWFAFDVCSTAPFQSLSLLF. At 156–165 the chain is on the extracellular side; it reads KYNGSEIGFR. A glycan (N-linked (GlcNAc...) asparagine) is linked at Asn158. Residues 166-186 form a helical; Voltage-sensor membrane-spanning segment; the sequence is VLSMLRLWRLRRVSSLFARLE. Residues 187-200 are Cytoplasmic-facing; the sequence is KDIRFNYFWTRCTK. Residues 201–221 traverse the membrane as a helical segment; sequence LISVTLFAVHCAGCFAYLIAD. The Extracellular segment spans residues 222 to 248; the sequence is QYHDPTKTWIGAVYPNFKETSVWSRYV. Positions 249 to 268 form an intramembrane region, pore-forming; the sequence is TALYWSITTLTTTGYGDLHA. Residues 269–272 are Extracellular-facing; the sequence is ENPR. A helical transmembrane segment spans residues 273–293; the sequence is EMLFFVFFMLFNLGFTSYLIG. Residues 294–697 lie on the Cytoplasmic side of the membrane; it reads NMTNLVVHWT…HLYILINENS (404 aa). 377-496 serves as a coordination point for a nucleoside 3',5'-cyclic phosphate; that stretch reads LFHGVSRNFL…RVIMNNLFMK (120 aa). Residues 629-697 enclose the KHA domain; that stretch reads RVTIHLKSRD…HLYILINENS (69 aa).

The protein belongs to the potassium channel family. Plant (TC 1.A.1.4) subfamily. The potassium channel is probably composed of a homo- or heterotetrameric complex of pore-forming subunits. May interact with KAT1. Interacts with SLAC1. In terms of tissue distribution, expressed in guard cells of hypocotyls, stems leaves and petioles. Detected also in the phloem of minor veins and in flower at a lower level.

It localises to the membrane. Its function is as follows. Highly selective inward-rectifying potassium channel. This voltage-dependent channel could mediate long-term potassium influx into guard cells leading to stomatal opening. Assuming opened or closed conformations in response to the voltage difference across the membrane, the channel is activated by hyperpolarization. The channel activity is enhanced upon external acidification. This chain is Potassium channel KAT2 (KAT2), found in Arabidopsis thaliana (Mouse-ear cress).